A 268-amino-acid polypeptide reads, in one-letter code: Testis-specific serine/threonine-protein kinase 3 (268 aa).

Positions 10–265 (YQLGKTIGEG…IEEVSWHPWL (256 aa)) constitute a Protein kinase domain. ATP contacts are provided by residues 16-24 (IGEGTYSKV) and K39. The Proton acceptor role is filled by D134. The residue at position 166 (S166) is a Phosphoserine; by autocatalysis. At T168 the chain carries Phosphothreonine; by PDPK1.

Belongs to the protein kinase superfamily. CAMK Ser/Thr protein kinase family. It depends on Mg(2+) as a cofactor. Mn(2+) is required as a cofactor. Autophosphorylated at Ser-166. Phosphorylation at Thr-168 by PDPK1 activates the serine/threonine protein kinase activity. As to expression, developmentally expressed in testicular germ cells. In adult testis, expression was detected in round and condensing spermatids, but not in meiotic pachytene spermatocytes. Not expressed in brain, ovary, kidney, liver or early embryonic cells.

Its subcellular location is the cell projection. It is found in the cilium. The protein localises to the flagellum. It catalyses the reaction L-seryl-[protein] + ATP = O-phospho-L-seryl-[protein] + ADP + H(+). The enzyme catalyses L-threonyl-[protein] + ATP = O-phospho-L-threonyl-[protein] + ADP + H(+). Its activity is regulated as follows. Activated by phosphorylation on Thr-168 by PDPK1. Functionally, serine/threonine protein kinase required for spermatid development and male fertility. The chain is Testis-specific serine/threonine-protein kinase 3 from Mus musculus (Mouse).